Consider the following 353-residue polypeptide: Phospho-N-acetylmuramoyl-pentapeptide-transferase (353 aa).

Transmembrane regions (helical) follow at residues 16–36, 64–84, 88–108, 130–150, 160–180, 198–218, 228–248, 256–276, 281–301, and 330–350; these read YISV…MYLM, AGTP…ATVL, LNNF…LIGI, LIFQ…YGHS, FPLF…IVGS, SILA…AVFA, IAGE…AFLW, VFMG…LAIV, ILLL…ILQV, and KIIV…LLSL.

It belongs to the glycosyltransferase 4 family. MraY subfamily. Mg(2+) is required as a cofactor.

The protein resides in the cell inner membrane. It catalyses the reaction UDP-N-acetyl-alpha-D-muramoyl-L-alanyl-gamma-D-glutamyl-meso-2,6-diaminopimeloyl-D-alanyl-D-alanine + di-trans,octa-cis-undecaprenyl phosphate = di-trans,octa-cis-undecaprenyl diphospho-N-acetyl-alpha-D-muramoyl-L-alanyl-D-glutamyl-meso-2,6-diaminopimeloyl-D-alanyl-D-alanine + UMP. Its pathway is cell wall biogenesis; peptidoglycan biosynthesis. Its function is as follows. Catalyzes the initial step of the lipid cycle reactions in the biosynthesis of the cell wall peptidoglycan: transfers peptidoglycan precursor phospho-MurNAc-pentapeptide from UDP-MurNAc-pentapeptide onto the lipid carrier undecaprenyl phosphate, yielding undecaprenyl-pyrophosphoryl-MurNAc-pentapeptide, known as lipid I. This Aliarcobacter butzleri (strain RM4018) (Arcobacter butzleri) protein is Phospho-N-acetylmuramoyl-pentapeptide-transferase.